A 102-amino-acid polypeptide reads, in one-letter code: Salivary protein Salp9 (102 aa).

Residues 1 to 21 form the signal peptide; the sequence is MGLTEIMLVLVSLAFVATAAA. Residues asparagine 26 and asparagine 87 are each glycosylated (N-linked (GlcNAc...) asparagine). A disordered region spans residues 83-102; it reads SGVPNDTDAKIEETEEELEA.

This sequence belongs to the salp14 family. As to expression, salivary gland (at protein level). Saliva (at protein level). Midgut.

It is found in the secreted. Salivary protein that facilitates blood feeding of adult ticks on vertebrate species. Inhibits the lectin pathway of complement system activation in the host. This is Salivary protein Salp9 from Ixodes scapularis (Black-legged tick).